A 600-amino-acid chain; its full sequence is Methionine--tRNA ligase (600 aa).

Residues 11-21 carry the 'HIGH' region motif; it reads PYANGPRHIGH. 4 residues coordinate Zn(2+): Cys-143, Cys-146, Cys-156, and Cys-159. A 'KMSKS' region motif is present at residues 351–355; sequence KFSSS. Residue Ser-354 coordinates ATP.

This sequence belongs to the class-I aminoacyl-tRNA synthetase family. MetG type 1 subfamily. As to quaternary structure, monomer. It depends on Zn(2+) as a cofactor.

The protein localises to the cytoplasm. The catalysed reaction is tRNA(Met) + L-methionine + ATP = L-methionyl-tRNA(Met) + AMP + diphosphate. Is required not only for elongation of protein synthesis but also for the initiation of all mRNA translation through initiator tRNA(fMet) aminoacylation. The sequence is that of Methionine--tRNA ligase from Salinispora arenicola (strain CNS-205).